A 386-amino-acid chain; its full sequence is 3-hydroxyisobutyryl-CoA hydrolase, mitochondrial (386 aa).

The transit peptide at 1-32 (MGQREMWRLMSRFNAFKRTNTILHHLRMSKHT) directs the protein to the mitochondrion. Lys55 and Lys92 each carry N6-acetyllysine; alternate. Lys55 and Lys92 each carry N6-succinyllysine; alternate. 4 residues coordinate substrate: Glu121, Gly146, Glu169, and Asp177. At Lys221 the chain carries N6-acetyllysine; alternate. An N6-succinyllysine; alternate modification is found at Lys221. Position 234 is a phosphoserine (Ser234). Lys257 is modified (N6-succinyllysine). Lys297 bears the N6-acetyllysine; alternate mark. Lys297 is subject to N6-succinyllysine; alternate. Lys301 is subject to N6-succinyllysine. N6-acetyllysine; alternate is present on Lys353. Residue Lys353 is modified to N6-succinyllysine; alternate. The residue at position 356 (Ser356) is a Phosphoserine. N6-acetyllysine occurs at positions 360 and 365. An N6-succinyllysine modification is found at Lys377.

Belongs to the enoyl-CoA hydratase/isomerase family. In terms of tissue distribution, highly expressed in liver and kidney, also detected in heart, muscle and brain (at protein level). Not detected in lung.

The protein localises to the mitochondrion. It catalyses the reaction 3-hydroxy-2-methylpropanoyl-CoA + H2O = 3-hydroxy-2-methylpropanoate + CoA + H(+). The protein operates within amino-acid degradation; L-valine degradation. In terms of biological role, hydrolyzes 3-hydroxyisobutyryl-CoA (HIBYL-CoA), a saline catabolite. Has high activity toward isobutyryl-CoA. Could be an isobutyryl-CoA dehydrogenase that functions in valine catabolism. Also hydrolyzes 3-hydroxypropanoyl-CoA. This Homo sapiens (Human) protein is 3-hydroxyisobutyryl-CoA hydrolase, mitochondrial (HIBCH).